We begin with the raw amino-acid sequence, 315 residues long: Protein TIFY 4B (315 aa).

The tract at residues 113-145 is disordered; it reads CHRRDSPRSAEFSGSSGQFVADKDSHKTVSVSP. In terms of domain architecture, Tify spans 151 to 186; it reads TNAVVGQMTIFYSGKVNVYDGVPPEKARSIMHFAAN. The Jas signature appears at 233 to 260; that stretch reads QANRKVSLQRYLEKRKDRRFSKTKKAPG. Positions 235-242 match the Nuclear localization signal motif; sequence NRKVSLQR. Residues 248-257 show a composition bias toward basic residues; it reads KDRRFSKTKK. The disordered stretch occupies residues 248–315; sequence KDRRFSKTKK…LNSDLNSEDN (68 aa). Polar residues predominate over residues 293 to 315; that stretch reads PENQTKSPNISVDLNSDLNSEDN.

The protein belongs to the TIFY/JAZ family. In terms of assembly, interacts with AFPH2/NINJA.

It is found in the nucleus. Its function is as follows. Regulates the arrest of dispersed meristematic cells during lamina development. The protein is Protein TIFY 4B (TIFY4B) of Arabidopsis thaliana (Mouse-ear cress).